The chain runs to 669 residues: Carnitine O-palmitoyltransferase 2, mitochondrial (669 aa).

The transit peptide at 1 to 36 (MMAGLLSTQCNSTLSKLKHLSNNPALSVLTSTHRKY) directs the protein to the mitochondrion. The Mitochondrial matrix segment spans residues 37–190 (SSKDGAGSEY…GLLEPEVFHL (154 aa)). An intramembrane region (note=Mitochondrial inner membrane) is located at residues 191-220 (NPAKSDTDSFKKLIRWVPPSISWFGAYMVN). The Mitochondrial matrix segment spans residues 221 to 669 (AYPLDMSQYF…FTVLDGNPIH (449 aa)). Histidine 384 (proton acceptor) is an active-site residue. A CoA-binding site is contributed by 464-476 (GKEQLKKKKLSPD). Tyrosine 498, serine 500, and threonine 511 together coordinate (R)-carnitine.

It belongs to the carnitine/choline acetyltransferase family.

It localises to the mitochondrion inner membrane. It carries out the reaction (R)-carnitine + hexadecanoyl-CoA = O-hexadecanoyl-(R)-carnitine + CoA. The catalysed reaction is octanoyl-CoA + (R)-carnitine = O-octanoyl-(R)-carnitine + CoA. It catalyses the reaction decanoyl-CoA + (R)-carnitine = O-decanoyl-(R)-carnitine + CoA. The enzyme catalyses dodecanoyl-CoA + (R)-carnitine = O-dodecanoyl-R-carnitine + CoA. It carries out the reaction tetradecanoyl-CoA + (R)-carnitine = O-tetradecanoyl-(R)-carnitine + CoA. The catalysed reaction is (R)-carnitine + octadecanoyl-CoA = O-octadecanoyl-(R)-carnitine + CoA. It catalyses the reaction eicosanoyl-CoA + (R)-carnitine = O-eicosanoyl-(R)-carnitine + CoA. The enzyme catalyses (9Z)-tetradecenoyl-CoA + (R)-carnitine = O-(9Z)-tetradecenoyl-(R)-carnitine + CoA. It carries out the reaction (5Z)-tetradecenoyl-CoA + (R)-carnitine = O-(5Z)-tetradecenoyl-(R)-carnitine + CoA. The catalysed reaction is (R)-carnitine + (9Z)-octadecenoyl-CoA = O-(9Z)-octadecenoyl-(R)-carnitine + CoA. It catalyses the reaction 4,8-dimethylnonanoyl-CoA + (R)-carnitine = O-4,8-dimethylnonanoyl-(R)-carnitine + CoA. The protein operates within lipid metabolism; fatty acid beta-oxidation. Involved in the intramitochondrial synthesis of acylcarnitines from accumulated acyl-CoA metabolites. Reconverts acylcarnitines back into the respective acyl-CoA esters that can then undergo beta-oxidation, an essential step for the mitochondrial uptake of long-chain fatty acids and their subsequent beta-oxidation in the mitochondrion. Active with medium (C8-C12) and long-chain (C14-C18) acyl-CoA esters. The sequence is that of Carnitine O-palmitoyltransferase 2, mitochondrial (cpt2) from Danio rerio (Zebrafish).